The sequence spans 357 residues: Protein XRP2 (357 aa).

A compositionally biased stretch (basic residues) spans 1–11 (MGCFFSKRRKP). Residues 1 to 39 (MGCFFSKRRKPAQGGQQQGASQEPAAGEEKAPQYSWDQR) are disordered. Glycine 2 is lipidated: N-myristoyl glycine. Cysteine 3 is lipidated: S-palmitoyl cysteine. The segment covering 12-25 (AQGGQQQGASQEPA) has biased composition (low complexity). Positions 32–186 (PQYSWDQRAK…TWSNIHDFTP (155 aa)) constitute a C-CAP/cofactor C-like domain. Residues 105–106 (GS) and 122–125 (QQFR) each bind GTP.

This sequence belongs to the TBCC family. Post-translationally, myristoylated on Gly-2; which may be required for membrane targeting. Palmitoylated on Cys-3; which may be required for plasma membrane targeting.

Its subcellular location is the cell membrane. Acts as a GTPase-activating protein (GAP) for tubulin in concert with tubulin-specific chaperone C, but does not enhance tubulin heterodimerization. Acts as a GTPase-activating protein. May act as guanine nucleotide dissociation inhibitor towards ADP-ribosylation factor-like proteins. The sequence is that of Protein XRP2 (RP2) from Gallus gallus (Chicken).